Consider the following 259-residue polypeptide: Glutamate racemase (259 aa).

Substrate-binding positions include 7–8 (DS) and 39–40 (YG). C70 (proton donor/acceptor) is an active-site residue. 71–72 (NS) provides a ligand contact to substrate. The active-site Proton donor/acceptor is the C180. Substrate is bound at residue 181 to 182 (TH).

Belongs to the aspartate/glutamate racemases family.

The enzyme catalyses L-glutamate = D-glutamate. Its pathway is cell wall biogenesis; peptidoglycan biosynthesis. Provides the (R)-glutamate required for cell wall biosynthesis. This Hydrogenobaculum sp. (strain Y04AAS1) protein is Glutamate racemase.